We begin with the raw amino-acid sequence, 458 residues long: Probable mitochondrial chaperone BCS1-B (458 aa).

Topologically, residues 1-26 are mitochondrial intermembrane; it reads MENVITNNNKGLPKSILKFIPEPIQP. A helical membrane pass occupies residues 27–47; it reads LFENPFFSAGFGLIGVGSILA. The Mitochondrial matrix segment spans residues 48-458; the sequence is MGRKGFQQAM…INNLNELIKK (411 aa). Residue 248-255 coordinates ATP; sequence GPPGTGKS.

Belongs to the AAA ATPase family. BCS1 subfamily.

Its subcellular location is the mitochondrion inner membrane. It catalyses the reaction ATP + H2O = ADP + phosphate + H(+). Functionally, chaperone necessary for the assembly of mitochondrial respiratory chain complex III. The sequence is that of Probable mitochondrial chaperone BCS1-B (bcsl1b) from Dictyostelium discoideum (Social amoeba).